A 397-amino-acid polypeptide reads, in one-letter code: Cysteine protease ATG4A (397 aa).

Cys79 acts as the Nucleophile in catalysis. Catalysis depends on residues Asp279 and His281. Residues 392-395 carry the LIR motif; sequence FEIL.

The protein belongs to the peptidase C54 family.

The protein localises to the cytoplasm. The catalysed reaction is [protein]-C-terminal L-amino acid-glycyl-phosphatidylethanolamide + H2O = [protein]-C-terminal L-amino acid-glycine + a 1,2-diacyl-sn-glycero-3-phosphoethanolamine. Functionally, cysteine protease that plays a key role in autophagy by mediating both proteolytic activation and delipidation of ATG8 family proteins. The protease activity is required for proteolytic activation of ATG8 family proteins: cleaves the C-terminal amino acid of ATG8 proteins to reveal a C-terminal glycine. Exposure of the glycine at the C-terminus is essential for ATG8 proteins conjugation to phosphatidylethanolamine (PE) and insertion to membranes, which is necessary for autophagy. Protease activity is also required to counteract formation of high-molecular weight conjugates of ATG8 proteins (ATG8ylation): acts as a deubiquitinating-like enzyme that removes ATG8 conjugated to other proteins, such as ATG3. In addition to the protease activity, also mediates delipidation of ATG8 family proteins. Catalyzes delipidation of PE-conjugated forms of ATG8 proteins during macroautophagy. In Xenopus laevis (African clawed frog), this protein is Cysteine protease ATG4A.